The sequence spans 149 residues: MRAVVQRVDGASVSVAGATDDPSAPGVVGEIVGEGLCVLVGVTHDDTPQKAAQLARKLWSVRVLEGEKSCSDVNAPLLVISQFTLYGDARKGRRPTWNAAAPGEVAEPLVDEVVAQLRALGARVETGRFGADMRVSLTNHGPFTVIIEV.

Positions 141–142 (GP) match the Gly-cisPro motif, important for rejection of L-amino acids motif.

It belongs to the DTD family. As to quaternary structure, homodimer.

Its subcellular location is the cytoplasm. It catalyses the reaction glycyl-tRNA(Ala) + H2O = tRNA(Ala) + glycine + H(+). The enzyme catalyses a D-aminoacyl-tRNA + H2O = a tRNA + a D-alpha-amino acid + H(+). Functionally, an aminoacyl-tRNA editing enzyme that deacylates mischarged D-aminoacyl-tRNAs. Also deacylates mischarged glycyl-tRNA(Ala), protecting cells against glycine mischarging by AlaRS. Acts via tRNA-based rather than protein-based catalysis; rejects L-amino acids rather than detecting D-amino acids in the active site. By recycling D-aminoacyl-tRNA to D-amino acids and free tRNA molecules, this enzyme counteracts the toxicity associated with the formation of D-aminoacyl-tRNA entities in vivo and helps enforce protein L-homochirality. This chain is D-aminoacyl-tRNA deacylase, found in Streptomyces griseus subsp. griseus (strain JCM 4626 / CBS 651.72 / NBRC 13350 / KCC S-0626 / ISP 5235).